The primary structure comprises 424 residues: Histidine--tRNA ligase (424 aa).

Belongs to the class-II aminoacyl-tRNA synthetase family. In terms of assembly, homodimer.

The protein resides in the cytoplasm. The catalysed reaction is tRNA(His) + L-histidine + ATP = L-histidyl-tRNA(His) + AMP + diphosphate + H(+). This chain is Histidine--tRNA ligase, found in Shewanella frigidimarina (strain NCIMB 400).